The sequence spans 264 residues: Potassium channel regulatory protein (264 aa).

Residues 5-74 form the BTB domain; sequence DLVTLNVGGR…LRNHELLLPS (70 aa).

Can form homooligomers. Interacts with KCNA1 (via cytoplasmic N-terminal domain) and KCNA4.

Its subcellular location is the endoplasmic reticulum. Functionally, inhibits potassium fluxes in cells. May regulate Kv1 family channel proteins by retaining a fraction of channels in endomembranes. This is Potassium channel regulatory protein (Kcnrg) from Mus musculus (Mouse).